The chain runs to 464 residues: Probable acid phosphatase DDB_G0284753 (464 aa).

A disordered region spans residues 1-29 (MFSYFRKSQQKVEENQNGGGGDGRGSGIK). The span at 17-26 (NGGGGDGRGS) shows a compositional bias: gly residues. His81 acts as the Nucleophile in catalysis. Positions 180-202 (SFTDEQEKSPHHSSFLVKPDNEE) are disordered. Asp347 functions as the Proton donor in the catalytic mechanism.

It belongs to the histidine acid phosphatase family.

It carries out the reaction a phosphate monoester + H2O = an alcohol + phosphate. This is Probable acid phosphatase DDB_G0284753 from Dictyostelium discoideum (Social amoeba).